The sequence spans 431 residues: Argininosuccinate lyase (431 aa).

It belongs to the lyase 1 family. Argininosuccinate lyase subfamily.

The protein resides in the cytoplasm. It carries out the reaction 2-(N(omega)-L-arginino)succinate = fumarate + L-arginine. It functions in the pathway amino-acid biosynthesis; L-arginine biosynthesis; L-arginine from L-ornithine and carbamoyl phosphate: step 3/3. This Stenotrophomonas maltophilia (strain K279a) protein is Argininosuccinate lyase.